The following is a 418-amino-acid chain: D-amino acid dehydrogenase (418 aa).

3 to 17 (VTILGAGVVGVTSAW) is a binding site for FAD.

This sequence belongs to the DadA oxidoreductase family. Requires FAD as cofactor.

The enzyme catalyses a D-alpha-amino acid + A + H2O = a 2-oxocarboxylate + AH2 + NH4(+). Its pathway is amino-acid degradation; D-alanine degradation; NH(3) and pyruvate from D-alanine: step 1/1. In terms of biological role, oxidative deamination of D-amino acids. The polypeptide is D-amino acid dehydrogenase (Agrobacterium fabrum (strain C58 / ATCC 33970) (Agrobacterium tumefaciens (strain C58))).